The chain runs to 898 residues: Serine/threonine-protein kinase TAO3 (898 aa).

A Protein kinase domain is found at 24-277 (FIGLHEIGHG…SAELLRHDFV (254 aa)). Residues 30–38 (IGHGSFGAV) and Lys53 each bind ATP. The Proton acceptor role is filled by Asp147. 2 disordered regions span residues 316–362 (TRNG…SQSS) and 405–425 (DEAG…VQSQ). Ser324 is modified (phosphoserine; by ATM). Ser331, Ser343, Ser346, and Ser349 each carry phosphoserine. Polar residues predominate over residues 334 to 351 (GTSLNREMDSLGSNHSIP). Low complexity predominate over residues 352–362 (SMSVSTGSQSS). Thr357 is subject to Phosphothreonine. Phosphoserine is present on Ser359. The segment covering 405–416 (DEAGHGDPRPEP) has biased composition (basic and acidic residues). Ser442 carries the post-translational modification Phosphoserine. Coiled-coil stretches lie at residues 452 to 502 (EQEN…THAN), 548 to 649 (FLES…HAML), and 754 to 879 (LKTL…DMES). Residues 565–596 (EEMNEDHSTPKKEKQERISKHKENLQHTQAEE) are disordered. Lys830 is modified (N6-acetyllysine).

This sequence belongs to the protein kinase superfamily. STE Ser/Thr protein kinase family. STE20 subfamily. In terms of assembly, self-associates. Interacts with ERN1 and TRAF2. Interaction with TRAF2 is facilitated under ER stress conditions, such as treatment with tunicamycin, and may promote TRAF2 phosphorylation. Interacts (via N-terminus) with STK25; the interaction promotes STK25 abundance at the level of protein expression and/or stability. As to quaternary structure, (Microbial infection) Interacts with herpes simplex virus 1 UL37 protein. Autophosphorylated. Phosphorylation at Ser-324 by ATM following DNA damage is required for activation of the p38/MAPK14 stress-activated MAPK cascade. Phosphorylated at Ser-324 and on Tyr residues during T cell activation. Phosphorylated by LRRK2. As to expression, ubiquitously expressed at a low level, and highly expressed in peripheral blood leukocytes (PBLs), thymus, spleen, kidney, skeletal muscle, heart and liver.

Its subcellular location is the cytoplasm. The protein resides in the cell membrane. It localises to the membrane raft. It is found in the lipid droplet. The enzyme catalyses L-seryl-[protein] + ATP = O-phospho-L-seryl-[protein] + ADP + H(+). It carries out the reaction L-threonyl-[protein] + ATP = O-phospho-L-threonyl-[protein] + ADP + H(+). Functionally, serine/threonine-protein kinase that acts as a regulator of the p38/MAPK14 stress-activated MAPK cascade and of the MAPK8/JNK cascade. In response to DNA damage, involved in the G2/M transition DNA damage checkpoint by activating the p38/MAPK14 stress-activated MAPK cascade, probably by mediating phosphorylation of upstream MAP2K3 and MAP2K6 kinases. Inhibits basal activity of the MAPK8/JNK cascade and diminishes its activation in response to epidermal growth factor (EGF). Positively regulates canonical T cell receptor (TCR) signaling by preventing early PTPN6/SHP1-mediated inactivation of LCK, ensuring sustained TCR signaling that is required for optimal activation and differentiation of T cells. Phosphorylates PTPN6/SHP1 on 'Thr-394', leading to its polyubiquitination and subsequent proteasomal degradation. Required for cell surface expression of metalloprotease ADAM10 on type 1 transitional B cells which is necessary for their NOTCH-mediated development into marginal zone B cells. Also required for the NOTCH-mediated terminal differentiation of splenic conventional type 2 dendritic cells. Positively regulates osteoblast differentiation by acting as an upstream activator of the JNK pathway. Promotes JNK signaling in hepatocytes and positively regulates hepatocyte lipid storage by inhibiting beta-oxidation and triacylglycerol secretion while enhancing lipid synthesis. Restricts age-associated inflammation by negatively regulating differentiation of macrophages and their production of pro-inflammatory cytokines. Plays a role in negatively regulating the abundance of regulatory T cells in white adipose tissue. This is Serine/threonine-protein kinase TAO3 (TAOK3) from Homo sapiens (Human).